Reading from the N-terminus, the 2194-residue chain is MAQPQLLQIKLSRFDAQPWGFRLQGGTDFAQPLLVQKVNAGSLSEQAGLQPGDAVVKINDVDVFNLRHKDAQDIVVRSGNNFVITVQRGGSTWRPHVTPTGNVPQPNSPYLQTVTKTSLAHKQQDSQHIGCGYNNAARPFSNGGDGGVKSIVNKQYNTPVGIYSDESIAETLSAQAEVLAGGVLGVNFKKNEKEYQGDRSEVLKFLREEETGQSTPAFGNSHYEHDAPQQLQQPQQQYNQHQQHYHQQQQQQQSSTTRHVSAPVNSPKPPSTGGLPTGQNICTECERLITGVFVRIKDKNLHVECFKCATCGTSLKNQGYYNFNNKLYCDIHAKQAAINNPPTGTEGYVPVPIKPNTKLSASTISSALNSHGYGGHSNGYSNGNSTPAPAPVASSQATATVATVAPSAATAATAAATPQAATATDSPAATASSSDNMSAYVADEPSSIYGQISAESVALAPPPPQPPTAGGGDQPFEYVTLTGNVIRSVQAPGKGACPSYKVNQGYARPFGAAAPKSPVSYPPQQQQQSPRPAPGGQNPYATLPRSNVGQQGGEAVEELQPEFEEEDCYEMDIEVALAASRQSQRGSSFTWPPPQDDSHLAPTAAPLYIPPPETQHVVVSNPVQQVPPLPPGGATARLDPQPVVGTSANGAPQWQSYSAPQLTTASARQLAEQESSSDSYTSTSTTTTTTSEEYQRMYAAQVQAYQMQEQSGSEFDYQVDYASTQDSVQDYPSGRRSAQECVDSLAVPLSTYKLVDMVREVTPSPVTTPTQTPAPAAPTTRRVVFNDEPEIKELPQLPAELETIPEASEAVEDREGLVIEQRCQILESERKFQPTPEIKIEIAPVRQIPPTKIPNPMPKEWINPMIRVLTTAPEVPFHLVECPFPRPCGDDFEAEAAAAEAAKTQEVPEPLPPQVSAAPPATVSVEPSPAPLRESPPRGSRLSQAMVTAPEFELKFAPPADQGIPLPEETEPYMPPPIDTKPYLREDYRPKSPFVSALTTAPDRPFEGHFDKDVPIHMIDLPTPKEHLSMCDALCTAPERGYTPLNPENAMHRVDEEQKQQELKKREFQVLDHEEELGIRPEPPQSVEYYETRRDQPRKSSAFAAMQAFQPSREPLSSNTVSNAGSVADTPRASIVSALKEETDLEYQKYLKAQQRNQKRLDYFHQKEEELSGLQGQQLTQLQRELSNQQQNLLSQQQLQQSKLLQLQQCVQSQELQQQVQHLTQKSQQQPPQANQQQQQQQQQRGTQQQQHSQVTQRTQQQQQQVPQQVTQQQQQEHSLLSQTTLAETQTLQANAQSQSSASYSSKATACSNSSSTVPPANTSTAFAPAPAPAPTSIPVRPSAIAVQSSYCSSQFDVHELIEETAEELEHSEVLFPPPSPLSHLTKQGKAVQSGLHKADSIPKYQRNWTVLPTQSPIRTPEPQELRENVPLAFVDAPKAPVTSDSSTVHRPIAQVAAPTTVVAPSREREKERRPQLSVPIIVEDRSGPVTMAFQPLDELVRPDQALTPTRPYTPSLTNKPAPIVPFYQTEEKLVFEECSATHARNYNELNASPFPDRTRSPAPGPPPNPLNAIRAPRMKEPETKSNILSVSGGPRLQTGSITTGQSYQGQLLAHSEQSSQSASQSYNQQPERITEQRVGNLNIQQREQSSQLQQQAQSQTQSQTRSQVGNTQIERRRKVTEEFERTQSAKTIEIRTGSQSVSQSKAQSQSISQAQTQAQSQSQNQSDTERRSSYGKTGFVASQAKRLSCMEEEISSLTSQSQAISARASALGEGCFPNLRSPTFDSKFPLKPAPAESIVPGYATVPAATKMLTAPPPGFLQQQQQQQQRSAFSGYQATTSSVQQSSFASSSKATTSSLSSSSASASASASVARSSQSLTQASAITTTTNNQATTAYRSSNGSITKPNLASRPSIASITAPGSASAPAPVPSAAPTKATAPFKAPIVPKSVIANAVNAAAPPAPAVFPPDLSDLNLNSNVDNSPGAGGKSAGAFGATSAPKRGRGILNKAAGPGVRIPLCNSCNVQIRGPFITALGRIWCPDHFICVNGNCRRPLQDIGFVEEKGDLYCEYCFEKYLAPTCSKCAGKIKGDCLNAIGKHFHPECFTCGQCGKIFGNRPFFLEDGNAYCEADWNELFTTKCFACGFPVEAGDRWVEALNHNYHSQCFNCTFCKQNLEGQSFYNKGGRPFCKNHAR.

A PDZ domain is found at 8–90; sequence QIKLSRFDAQ…NFVITVQRGG (83 aa). The interval 211–277 is disordered; the sequence is TGQSTPAFGN…KPPSTGGLPT (67 aa). Over residues 228-253 the composition is skewed to low complexity; that stretch reads PQQLQQPQQQYNQHQQHYHQQQQQQQ. The region spanning 280–339 is the LIM zinc-binding 1 domain; the sequence is NICTECERLITGVFVRIKDKNLHVECFKCATCGTSLKNQGYYNFNNKLYCDIHAKQAAIN. Over residues 415-435 the composition is skewed to low complexity; it reads AATPQAATATDSPAATASSSD. Disordered regions lie at residues 415–436, 457–476, 511–558, 580–611, 623–692, 896–940, 1223–1260, 1297–1322, 1550–1632, 1646–1738, and 1815–1837; these read AATPQAATATDSPAATASSSDN, VALAPPPPQPPTAGGGDQPF, GAAA…AVEE, SRQSQRGSSFTWPPPQDDSHLAPTAAPLYIPP, VQQV…TTSE, AAAA…PRGS, LTQKSQQQPPQANQQQQQQQQQRGTQQQQHSQVTQRTQ, QSQSSASYSSKATACSNSSSTVPPAN, LNAS…QQPE, QREQ…YGKT, and APPPGFLQQQQQQQQRSAFSGYQ. The segment covering 515-530 has biased composition (low complexity); it reads PKSPVSYPPQQQQQSP. Polar residues-rich tracts occupy residues 580-590 and 644-667; these read SRQSQRGSSFT and VGTSANGAPQWQSYSAPQLTTASA. The span at 676–692 shows a compositional bias: low complexity; that stretch reads SSDSYTSTSTTTTTTSE. The span at 1598–1610 shows a compositional bias: polar residues; sequence QTGSITTGQSYQG. Composition is skewed to low complexity over residues 1616-1630, 1646-1668, and 1699-1727; these read SEQSSQSASQSYNQQ, QREQSSQLQQQAQSQTQSQTRSQ, and SQSVSQSKAQSQSISQAQTQAQSQSQNQS. LIM zinc-binding domains follow at residues 2018-2078, 2079-2138, and 2139-2194; these read PLCN…KYLA, PTCS…LFTT, and KCFA…NHAR.

Interacts with alpha-actinin (Actn). Expression is first detected in the proctodeum and the midgut primordium. In stage 11 embryos, expression is predominant in the leading edge of epidermal cells adjacent to the amnioserosa. Stage 12 embryos exhibit expression in the midgut and the leading edge. Expressed in several rows of germ band cells next to the leading edge at stage 14. Strong expression is visible in the midgut and pharyngeal muscles of stage 17 embryos. Also expressed in somatic muscles and visceral mesoderm. Colocalizes with mys (beta PS integrin) in myotendinous junctions and with Actn in muscle Z lines.

The protein localises to the cytoplasm. Its subcellular location is the cytoskeleton. Functionally, regulator of cell matrix adhesion having two related functions, one upstream of Actn organizing the Z line and the other downstream of integrins regulating assembly of integrin adhesion sites. Also required for the formation of myotendinous junctions in muscles. This is PDZ and LIM domain protein Zasp (Zasp52) from Drosophila melanogaster (Fruit fly).